The sequence spans 954 residues: Glycine dehydrogenase (decarboxylating) (954 aa).

Lys701 carries the post-translational modification N6-(pyridoxal phosphate)lysine.

It belongs to the GcvP family. The glycine cleavage system is composed of four proteins: P, T, L and H. Requires pyridoxal 5'-phosphate as cofactor.

The catalysed reaction is N(6)-[(R)-lipoyl]-L-lysyl-[glycine-cleavage complex H protein] + glycine + H(+) = N(6)-[(R)-S(8)-aminomethyldihydrolipoyl]-L-lysyl-[glycine-cleavage complex H protein] + CO2. In terms of biological role, the glycine cleavage system catalyzes the degradation of glycine. The P protein binds the alpha-amino group of glycine through its pyridoxal phosphate cofactor; CO(2) is released and the remaining methylamine moiety is then transferred to the lipoamide cofactor of the H protein. In Bordetella pertussis (strain Tohama I / ATCC BAA-589 / NCTC 13251), this protein is Glycine dehydrogenase (decarboxylating).